The following is a 599-amino-acid chain: 2-succinyl-5-enolpyruvyl-6-hydroxy-3-cyclohexene-1-carboxylate synthase (599 aa).

Low complexity predominate over residues 1-21 (MTSENPLDPNNAYAAADDAPL). Residues 1-35 (MTSENPLDPNNAYAAADDAPLSEGDPTGAPADSGS) are disordered.

Belongs to the TPP enzyme family. MenD subfamily. As to quaternary structure, homodimer. Mg(2+) is required as a cofactor. Mn(2+) serves as cofactor. The cofactor is thiamine diphosphate.

It carries out the reaction isochorismate + 2-oxoglutarate + H(+) = 5-enolpyruvoyl-6-hydroxy-2-succinyl-cyclohex-3-ene-1-carboxylate + CO2. It functions in the pathway quinol/quinone metabolism; 1,4-dihydroxy-2-naphthoate biosynthesis; 1,4-dihydroxy-2-naphthoate from chorismate: step 2/7. It participates in quinol/quinone metabolism; menaquinone biosynthesis. Its function is as follows. Catalyzes the thiamine diphosphate-dependent decarboxylation of 2-oxoglutarate and the subsequent addition of the resulting succinic semialdehyde-thiamine pyrophosphate anion to isochorismate to yield 2-succinyl-5-enolpyruvyl-6-hydroxy-3-cyclohexene-1-carboxylate (SEPHCHC). This chain is 2-succinyl-5-enolpyruvyl-6-hydroxy-3-cyclohexene-1-carboxylate synthase, found in Arthrobacter sp. (strain FB24).